Here is a 263-residue protein sequence, read N- to C-terminus: Large ribosomal subunit protein uL10m (263 aa).

The transit peptide at Met-1–His-29 directs the protein to the mitochondrion. Residues Gln-241–Ser-263 form a disordered region.

Belongs to the universal ribosomal protein uL10 family. As to quaternary structure, component of the mitochondrial ribosome large subunit (39S) which comprises a 16S rRNA and about 50 distinct proteins.

It localises to the mitochondrion. The sequence is that of Large ribosomal subunit protein uL10m (Mrpl10) from Rattus norvegicus (Rat).